The sequence spans 147 residues: Protein-export protein SecB (147 aa).

It belongs to the SecB family. Homotetramer, a dimer of dimers. One homotetramer interacts with 1 SecA dimer.

Its subcellular location is the cytoplasm. Its function is as follows. One of the proteins required for the normal export of preproteins out of the cell cytoplasm. It is a molecular chaperone that binds to a subset of precursor proteins, maintaining them in a translocation-competent state. It also specifically binds to its receptor SecA. The polypeptide is Protein-export protein SecB (Neisseria meningitidis serogroup B (strain ATCC BAA-335 / MC58)).